The primary structure comprises 231 residues: eRF1 methyltransferase catalytic subunit mtq2 (231 aa).

Residues 54 to 58, Asp-80, and Asn-130 each bind S-adenosyl-L-methionine; that span reads GCGSG. Residue 130–133 participates in substrate binding; sequence NPPY.

It belongs to the eukaryotic/archaeal PrmC-related family. In terms of assembly, heterodimer of mtq2-trm112. mtq2 is the catalytic subunit carrying the catalytic and the S-adenosyl L-methionine binding sites.

The protein resides in the cytoplasm. It is found in the nucleus. It catalyses the reaction L-glutaminyl-[peptide chain release factor] + S-adenosyl-L-methionine = N(5)-methyl-L-glutaminyl-[peptide chain release factor] + S-adenosyl-L-homocysteine + H(+). Its function is as follows. Methylates eRF1 on 'Gln-182' using S-adenosyl L-methionine as methyl donor. eRF1 needs to be complexed to eRF3 in its GTP-bound form to be efficiently methylated. This is eRF1 methyltransferase catalytic subunit mtq2 (mtq2) from Schizosaccharomyces pombe (strain 972 / ATCC 24843) (Fission yeast).